The primary structure comprises 486 residues: Na(+)/H(+) antiporter NhaA 2 (486 aa).

11 consecutive transmembrane segments (helical) span residues 58 to 78 (GGLL…TAPG), 102 to 122 (LTDW…GLEL), 138 to 158 (ALPV…CLAL), 168 to 188 (AWAI…SLAG), 198 to 218 (VLLG…ALGL), 220 to 240 (HGIN…TALA), 260 to 280 (ISLH…GLLV), 300 to 320 (LGPI…TGVS), 338 to 358 (VAVG…WLAV), 374 to 394 (LVPL…ITRL), and 404 to 424 (GAST…LTAL). Residues 432–486 (GAPATRGSSRPATQVGGVAGPIPQTRRESDGGPTGGQEPPPARVRRAPPASPHPR) form a disordered region.

This sequence belongs to the NhaA Na(+)/H(+) (TC 2.A.33) antiporter family.

The protein localises to the cell membrane. It catalyses the reaction Na(+)(in) + 2 H(+)(out) = Na(+)(out) + 2 H(+)(in). Na(+)/H(+) antiporter that extrudes sodium in exchange for external protons. The polypeptide is Na(+)/H(+) antiporter NhaA 2 (Frankia alni (strain DSM 45986 / CECT 9034 / ACN14a)).